Reading from the N-terminus, the 457-residue chain is MDHLPIFCQLRDRDCLIVGGGDVAERKARLLLDAGARLTVNALAFIPQFTAWADAGMLTLVEGPFDESLLDTCWLAIAATDDDALNQRVSEAAEARRIFCNVVDAPKAASFIMPSIIDRSPLMVAVSSGGTSPVLARLLREKLESLLPLHLGQVAKYAGQLRGRVKQQFATMGERRRFWEKLFVNDRLAQSLANNDQKAITETTEQLINEPLDHRGEVVLVGAGPGDAGLLTLKGLQQIQQADVVVYDRLISDDIMNLVRRDADRVFVGKRAGYHCVPQEEINQILLREAQKGKRVVRLKGGDPFIFGRGGEELETLCNAGIPFSVVPGITAASGCSAYSGIPLTHRDYAQSVRLITGHLKTGGELDWENLAAEKQTLVFYMGLNQAATIQQKLIEYGMPGEMPVAIVENGTAVTQRVIDGTLTQLGELAQQMNSPSLIIIGRVVGLRDKLNWFSNH.

The precorrin-2 dehydrogenase /sirohydrochlorin ferrochelatase stretch occupies residues 1 to 204 (MDHLPIFCQL…NDQKAITETT (204 aa)). Residues 22 to 23 (DV) and 43 to 44 (LA) each bind NAD(+). Phosphoserine is present on S128. Residues 216–457 (GEVVLVGAGP…RDKLNWFSNH (242 aa)) form a uroporphyrinogen-III C-methyltransferase region. Position 225 (P225) interacts with S-adenosyl-L-methionine. D248 (proton acceptor) is an active-site residue. K270 (proton donor) is an active-site residue. S-adenosyl-L-methionine contacts are provided by residues 301 to 303 (GGD), I306, 331 to 332 (TA), M382, and G411.

In the N-terminal section; belongs to the precorrin-2 dehydrogenase / sirohydrochlorin ferrochelatase family. It in the C-terminal section; belongs to the precorrin methyltransferase family.

The catalysed reaction is uroporphyrinogen III + 2 S-adenosyl-L-methionine = precorrin-2 + 2 S-adenosyl-L-homocysteine + H(+). The enzyme catalyses precorrin-2 + NAD(+) = sirohydrochlorin + NADH + 2 H(+). It catalyses the reaction siroheme + 2 H(+) = sirohydrochlorin + Fe(2+). It functions in the pathway cofactor biosynthesis; adenosylcobalamin biosynthesis; precorrin-2 from uroporphyrinogen III: step 1/1. The protein operates within cofactor biosynthesis; adenosylcobalamin biosynthesis; sirohydrochlorin from precorrin-2: step 1/1. Its pathway is porphyrin-containing compound metabolism; siroheme biosynthesis; precorrin-2 from uroporphyrinogen III: step 1/1. It participates in porphyrin-containing compound metabolism; siroheme biosynthesis; siroheme from sirohydrochlorin: step 1/1. It functions in the pathway porphyrin-containing compound metabolism; siroheme biosynthesis; sirohydrochlorin from precorrin-2: step 1/1. Multifunctional enzyme that catalyzes the SAM-dependent methylations of uroporphyrinogen III at position C-2 and C-7 to form precorrin-2 via precorrin-1. Then it catalyzes the NAD-dependent ring dehydrogenation of precorrin-2 to yield sirohydrochlorin. Finally, it catalyzes the ferrochelation of sirohydrochlorin to yield siroheme. This chain is Siroheme synthase, found in Escherichia coli O81 (strain ED1a).